Reading from the N-terminus, the 134-residue chain is Translation initiation factor 5A (134 aa).

A Hypusine modification is found at Lys36.

It belongs to the eIF-5A family.

It is found in the cytoplasm. Its function is as follows. Functions by promoting the formation of the first peptide bond. The chain is Translation initiation factor 5A (eIF5A) from Korarchaeum cryptofilum (strain OPF8).